Here is a 375-residue protein sequence, read N- to C-terminus: Succinyl-diaminopimelate desuccinylase (375 aa).

Position 66 (His66) interacts with Zn(2+). Asp68 is a catalytic residue. Asp99 is a Zn(2+) binding site. The Proton acceptor role is filled by Glu133. Zn(2+) contacts are provided by Glu134, Glu162, and His348.

It belongs to the peptidase M20A family. DapE subfamily. In terms of assembly, homodimer. Zn(2+) serves as cofactor. It depends on Co(2+) as a cofactor.

It carries out the reaction N-succinyl-(2S,6S)-2,6-diaminopimelate + H2O = (2S,6S)-2,6-diaminopimelate + succinate. Its pathway is amino-acid biosynthesis; L-lysine biosynthesis via DAP pathway; LL-2,6-diaminopimelate from (S)-tetrahydrodipicolinate (succinylase route): step 3/3. Catalyzes the hydrolysis of N-succinyl-L,L-diaminopimelic acid (SDAP), forming succinate and LL-2,6-diaminopimelate (DAP), an intermediate involved in the bacterial biosynthesis of lysine and meso-diaminopimelic acid, an essential component of bacterial cell walls. The polypeptide is Succinyl-diaminopimelate desuccinylase (Teredinibacter turnerae (strain ATCC 39867 / T7901)).